The chain runs to 175 residues: Large ribosomal subunit protein uL6 (175 aa).

Belongs to the universal ribosomal protein uL6 family. Part of the 50S ribosomal subunit.

Its function is as follows. This protein binds to the 23S rRNA, and is important in its secondary structure. It is located near the subunit interface in the base of the L7/L12 stalk, and near the tRNA binding site of the peptidyltransferase center. The polypeptide is Large ribosomal subunit protein uL6 (Xylella fastidiosa (strain 9a5c)).